We begin with the raw amino-acid sequence, 317 residues long: Ribosomal RNA large subunit methyltransferase F (317 aa).

The protein belongs to the methyltransferase superfamily. METTL16/RlmF family.

It localises to the cytoplasm. The catalysed reaction is adenosine(1618) in 23S rRNA + S-adenosyl-L-methionine = N(6)-methyladenosine(1618) in 23S rRNA + S-adenosyl-L-homocysteine + H(+). Specifically methylates the adenine in position 1618 of 23S rRNA. In Pseudomonas putida (strain ATCC 700007 / DSM 6899 / JCM 31910 / BCRC 17059 / LMG 24140 / F1), this protein is Ribosomal RNA large subunit methyltransferase F.